Reading from the N-terminus, the 165-residue chain is uncharacterized protein (165 aa).

A disordered region spans residues 68–107 (LEGAPEWAAPHPEEQRRSPPACSQHTPPLPSTPTGPPPCS). Pro residues predominate over residues 94 to 107 (PPLPSTPTGPPPCS).

This is an uncharacterized protein from Homo sapiens (Human).